Reading from the N-terminus, the 1025-residue chain is RNA cytidine acetyltransferase (1025 aa).

ATP is bound at residue 287–296 (GRGKSAALGL). Residue lysine 426 is modified to N6-acetyllysine. Arginine 470 is a binding site for ATP. In terms of domain architecture, N-acetyltransferase spans 558 to 753 (CLLPPVPPTQ…HSCIMLKTLT (196 aa)). Acetyl-CoA is bound by residues 629–631 (IAV) and 636–642 (QGMGYGS). The tract at residues 702 to 1025 (PAERLDYLGV…KKDMKLKRKK (324 aa)) is required for localization to the nucleolus and midbody. The residue at position 716 (threonine 716) is a Phosphothreonine. Residue arginine 725 participates in acetyl-CoA binding. Phosphoserine occurs at positions 934, 984, and 987. Positions 990–1025 (SDKKRKLEAKQEPKQSKKLKNRETKNKKDMKLKRKK) are disordered. Residues 997-1018 (EAKQEPKQSKKLKNRETKNKKD) are compositionally biased toward basic and acidic residues.

The protein belongs to the RNA cytidine acetyltransferase family. NAT10 subfamily. Part of the small subunit (SSU) processome, composed of more than 70 proteins and the RNA chaperone small nucleolar RNA (snoRNA) U3. Interacts with THUMPD1. Interacts with SUN1 (via N-terminus). Interacts with TERT. Post-translationally, acetylation at Lys-426 is required to activation of rRNA transcription. May be autoacetylated; however ability to autoacetylate in vivo requires additional evidences.

The protein localises to the nucleus. It localises to the nucleolus. It is found in the midbody. It carries out the reaction a cytidine in 18S rRNA + acetyl-CoA + ATP + H2O = an N(4)-acetylcytidine in 18S rRNA + ADP + phosphate + CoA + H(+). The catalysed reaction is a cytidine in tRNA + acetyl-CoA + ATP + H2O = an N(4)-acetylcytidine in tRNA + ADP + phosphate + CoA + H(+). The enzyme catalyses a cytidine in mRNA + acetyl-CoA + ATP + H2O = an N(4)-acetylcytidine in mRNA + ADP + phosphate + CoA + H(+). With respect to regulation, specifically inhibited by remodelin (4-[2-(2-cyclopentylidenehydrazinyl)-4-thiazolyl]-benzonitrile, monohydrobromide), a hydrobromide salt molecule. Remodelin can improve nuclear architecture, chromatin organization and fitness of cells from patients suffering from Hutchinson-Gilford progeria syndrome (HGPS); molecular mechanisms explaining the relation between NAT10 activity and nuclear architecture are however unclear. In terms of biological role, RNA cytidine acetyltransferase that catalyzes the formation of N(4)-acetylcytidine (ac4C) modification on mRNAs, 18S rRNA and tRNAs. Catalyzes ac4C modification of a broad range of mRNAs, enhancing mRNA stability and translation. mRNA ac4C modification is frequently present within wobble cytidine sites and promotes translation efficiency. Mediates the formation of ac4C at position 1842 in 18S rRNA. May also catalyze the formation of ac4C at position 1337 in 18S rRNA. Required for early nucleolar cleavages of precursor rRNA at sites A0, A1 and A2 during 18S rRNA synthesis. Catalyzes the formation of ac4C in serine and leucine tRNAs. Requires the tRNA-binding adapter protein THUMPD1 for full tRNA acetyltransferase activity but not for 18S rRNA acetylation. In addition to RNA acetyltransferase activity, also able to acetylate lysine residues of proteins, such as histones, microtubules, p53/TP53 and MDM2, in vitro. The relevance of the protein lysine acetyltransferase activity is however unsure in vivo. Activates telomerase activity by stimulating the transcription of TERT, and may also regulate telomerase function by affecting the balance of telomerase subunit assembly, disassembly, and localization. Involved in the regulation of centrosome duplication by acetylating CENATAC during mitosis, promoting SASS6 proteasome degradation. Part of the small subunit (SSU) processome, first precursor of the small eukaryotic ribosomal subunit. During the assembly of the SSU processome in the nucleolus, many ribosome biogenesis factors, an RNA chaperone and ribosomal proteins associate with the nascent pre-rRNA and work in concert to generate RNA folding, modifications, rearrangements and cleavage as well as targeted degradation of pre-ribosomal RNA by the RNA exosome. This is RNA cytidine acetyltransferase from Homo sapiens (Human).